Reading from the N-terminus, the 182-residue chain is ATP-dependent protease subunit HslV (182 aa).

Thr12 is an active-site residue. Positions 167, 170, and 173 each coordinate Na(+).

It belongs to the peptidase T1B family. HslV subfamily. In terms of assembly, a double ring-shaped homohexamer of HslV is capped on each side by a ring-shaped HslU homohexamer. The assembly of the HslU/HslV complex is dependent on binding of ATP.

It is found in the cytoplasm. The enzyme catalyses ATP-dependent cleavage of peptide bonds with broad specificity.. With respect to regulation, allosterically activated by HslU binding. Protease subunit of a proteasome-like degradation complex believed to be a general protein degrading machinery. In Prosthecochloris aestuarii (strain DSM 271 / SK 413), this protein is ATP-dependent protease subunit HslV.